The sequence spans 117 residues: UPF0125 protein VV0820 (117 aa).

Positions 90 to 117 (RKRAEQAKESGAADPVTGGKPSPLRKAD) are disordered.

It belongs to the UPF0125 (RnfH) family.

This chain is UPF0125 protein VV0820, found in Vibrio vulnificus (strain YJ016).